Here is a 654-residue protein sequence, read N- to C-terminus: Sphingosine kinase 2 (654 aa).

Basic and acidic residues predominate over residues 1-17 (MNGHLEAEEQQDQRPDQ). The segment at 1–28 (MNGHLEAEEQQDQRPDQELTGSWGHGPR) is disordered. Residues 1-175 (MNGHLEAEEQ…LPGDGEITPD (175 aa)) are required for binding to sulfatide and phosphoinositides and for membrane localizatione. The short motif at 122-130 (RGRRGARRR) is the Nuclear localization signal element. A DAGKc domain is found at 178–325 (PRPPRLLLLV…LDLLSVTLAS (148 aa)). ATP is bound by residues 188–190 (NPF) and 220–224 (TERQN). 245–248 (SGDG) is a binding site for substrate. Residue D247 is the Proton donor/acceptor of the active site. ATP-binding positions include E252 and 277 to 279 (GSG). A substrate-binding site is contributed by D344. ATP contacts are provided by R351 and R357. Phosphoserine; by MAPK is present on S387. 2 positions are modified to phosphoserine: S393 and S399. The interval 400–509 (ELTLTPDPAP…PLPTPDARVG (110 aa)) is disordered. The Nuclear export signal signature appears at 416–425 (LHRSVSDLPL). 2 positions are modified to phosphoserine; by PKD: S419 and S421. A compositionally biased stretch (gly residues) spans 447-461 (NGGGPELAGDWGGAG). Positions 462–482 (DAPLSPDPLLSSPPGSPKAAL) are enriched in low complexity. S477 carries the post-translational modification Phosphoserine. Residue T614 is modified to Phosphothreonine; by MAPK. Residue 622-624 (DGE) participates in ATP binding.

As to quaternary structure, interacts with histone H3. Interacts with HDAC1, HDAC2, MBD2 and SIN3A. Interacts with EEF1A1; the interaction enhances SPHK2 kinase activity. Interacts with PHB2. Mg(2+) serves as cofactor. Phosphorylated by PKD on Ser-419 and Ser-421 upon PMA treatment. Phosphorylation induces export from the nucleus to the cytoplasm. Phosphorylated by MAPK1 and MAPK2 at Ser-387 and Thr-614, phosphorylation is induced by agonists such as EGF and PMA and increases kinase activity. In terms of processing, cleaved by CASP1 in apoptotic cells. The truncated form is released from cells. Mainly expressed in adult kidney, liver, and brain. Expressed in cerebral cortex and hippocampus (at protein level). Isoform 1 is the predominant form expressed in most tissues.

It is found in the cytoplasm. The protein resides in the nucleus. Its subcellular location is the endoplasmic reticulum. It localises to the mitochondrion inner membrane. The protein localises to the lysosome membrane. It catalyses the reaction a sphingoid base + ATP = a sphingoid 1-phosphate + ADP + H(+). It carries out the reaction sphing-4-enine + ATP = sphing-4-enine 1-phosphate + ADP + H(+). The enzyme catalyses sphinganine + ATP = sphinganine 1-phosphate + ADP + H(+). The catalysed reaction is (4R)-hydroxysphinganine + ATP = (4R)-hydroxysphinganine 1-phosphate + ADP + H(+). Its activity is regulated as follows. Inhibited by sulfatide. Kinase activity is increased by phosphorylation by MAPK2 upon PMA or EGF treatments. In terms of biological role, catalyzes the phosphorylation of sphingosine to form sphingosine-1-phosphate (SPP), a lipid mediator with both intra- and extracellular functions. Also acts on D-erythro-dihydrosphingosine, D-erythro-sphingosine and L-threo-dihydrosphingosine. Binds phosphoinositides. In contrast to prosurvival SPHK1, has a positive effect on intracellular ceramide levels, inhibits cells growth and enhances apoptosis. In mitochondria, is important for cytochrome-c oxidase assembly and mitochondrial respiration. The SPP produced in mitochondria binds PHB2 and modulates the regulation via PHB2 of complex IV assembly and respiration. In nucleus, plays a role in epigenetic regulation of gene expression. Interacts with HDAC1 and HDAC2 and, through SPP production, inhibits their enzymatic activity, preventing the removal of acetyl groups from lysine residues with histones. Up-regulates acetylation of histone H3-K9, histone H4-K5 and histone H2B-K12. In nucleus, may have an inhibitory effect on DNA synthesis and cell cycle. In mast cells, is the main regulator of SPP production which mediates calcium influx, NF-kappa-B activation, cytokine production, such as TNF and IL6, and degranulation of mast cells. In dopaminergic neurons, is involved in promoting mitochondrial functions regulating ATP and ROS levels. Also involved in the regulation of glucose and lipid metabolism. The polypeptide is Sphingosine kinase 2 (Homo sapiens (Human)).